A 199-amino-acid polypeptide reads, in one-letter code: Putative acetyltransferase SAV2555 (199 aa).

Belongs to the transferase hexapeptide repeat family.

This chain is Putative acetyltransferase SAV2555, found in Staphylococcus aureus (strain Mu50 / ATCC 700699).